Consider the following 316-residue polypeptide: Acetyl-coenzyme A carboxylase carboxyl transferase subunit beta (316 aa).

Residues 39-308 (LWHKCSKCGV…PPHMVLWETM (270 aa)) form the CoA carboxyltransferase N-terminal domain. Cysteine 43, cysteine 46, cysteine 62, and cysteine 65 together coordinate Zn(2+). A C4-type zinc finger spans residues 43 to 65 (CSKCGVLAYTKDLKANQMVCIEC).

It belongs to the AccD/PCCB family. As to quaternary structure, acetyl-CoA carboxylase is a heterohexamer composed of biotin carboxyl carrier protein (AccB), biotin carboxylase (AccC) and two subunits each of ACCase subunit alpha (AccA) and ACCase subunit beta (AccD). Requires Zn(2+) as cofactor.

The protein resides in the cytoplasm. It carries out the reaction N(6)-carboxybiotinyl-L-lysyl-[protein] + acetyl-CoA = N(6)-biotinyl-L-lysyl-[protein] + malonyl-CoA. It functions in the pathway lipid metabolism; malonyl-CoA biosynthesis; malonyl-CoA from acetyl-CoA: step 1/1. Functionally, component of the acetyl coenzyme A carboxylase (ACC) complex. Biotin carboxylase (BC) catalyzes the carboxylation of biotin on its carrier protein (BCCP) and then the CO(2) group is transferred by the transcarboxylase to acetyl-CoA to form malonyl-CoA. In Nostoc punctiforme (strain ATCC 29133 / PCC 73102), this protein is Acetyl-coenzyme A carboxylase carboxyl transferase subunit beta.